Reading from the N-terminus, the 431-residue chain is TDP-daunosamine transferase DnrS (431 aa).

The N-terminal stretch at 1 to 23 is a signal peptide; the sequence is MKVLVTAFAMDAHFNGVVPLAWA.

The protein belongs to the glycosyltransferase 28 family.

The enzyme catalyses dTDP-beta-L-daunosamine + epsilon-rhodomycinone = rhodomycin D + dTDP + H(+). Its pathway is antibiotic biosynthesis; daunorubicin biosynthesis. The protein operates within antibiotic biosynthesis; carminomycin biosynthesis. Functionally, involved in the biosynthesis of the anthracyclines carminomycin and daunorubicin (daunomycin) which are aromatic polyketide antibiotics that exhibit high cytotoxicity and are widely applied in the chemotherapy of a variety of cancers. Catalyzes the addition of the TDP activated glycoside, L-daunosamine-TDP (2,3,6-trideoxy-3-aminohexose-TDP) at position C-7 of epsilon-rhodomycinone to yield rhodomycin D. Glycosylation is a prerequisite for biological activity of anthracyclines and requires DnrQ which seems to act as an activator. In Streptomyces peucetius, this protein is TDP-daunosamine transferase DnrS (dnrS).